The chain runs to 340 residues: NADH-quinone oxidoreductase subunit H (340 aa).

Helical transmembrane passes span 3-23 (LVGMVALMVGVLVSVAYLVYM), 69-89 (WAFFAAPVITFALALAGWAVI), 102-122 (VVVMPYVVADLNLGVLYVLAI), 127-147 (VYGIIMAGWASGSNYAFLGAI), 154-174 (ISYEMSMGLVMLSVSLCAGSL), 186-206 (MPYWMDLLLLPMAGVFFVSML), 248-268 (ILVSAMMVVLFLGGWYPPLNI), 274-294 (IPGFVWFCSKVFLLLFCFIWV), and 312-332 (KVFLPFSFVWVMVISGVLLWV).

This sequence belongs to the complex I subunit 1 family. As to quaternary structure, NDH-1 is composed of 14 different subunits. Subunits NuoA, H, J, K, L, M, N constitute the membrane sector of the complex.

It localises to the cell inner membrane. It carries out the reaction a quinone + NADH + 5 H(+)(in) = a quinol + NAD(+) + 4 H(+)(out). In terms of biological role, NDH-1 shuttles electrons from NADH, via FMN and iron-sulfur (Fe-S) centers, to quinones in the respiratory chain. The immediate electron acceptor for the enzyme in this species is believed to be ubiquinone. Couples the redox reaction to proton translocation (for every two electrons transferred, four hydrogen ions are translocated across the cytoplasmic membrane), and thus conserves the redox energy in a proton gradient. This subunit may bind ubiquinone. In Anaplasma phagocytophilum (strain HZ), this protein is NADH-quinone oxidoreductase subunit H.